The chain runs to 731 residues: Lanosterol synthase ERG7 (731 aa).

T2 bears the N-acetylthreonine mark. Residues 125-167 form a PFTB 1 repeat; it reads RIELIRYIVNTAHPVDGGWGLHSVDKSTVFGTVLNYVILRLLG. The Proton donor role is filled by D456. The stretch at 615–661 is one PFTB 2 repeat; the sequence is VRKGCDFLVSKQMKDGGWGESMKSSELHSYVDSEKSLVVQTAWALIA.

It belongs to the terpene cyclase/mutase family.

Its subcellular location is the lipid droplet. It is found in the endoplasmic reticulum membrane. It carries out the reaction (S)-2,3-epoxysqualene = lanosterol. Its pathway is terpene metabolism; lanosterol biosynthesis; lanosterol from farnesyl diphosphate: step 3/3. With respect to regulation, catalytic activity requires the presence of ERG27. Functionally, lanosterol synthase; part of the third module of ergosterol biosynthesis pathway that includes the late steps of the pathway. ERG7 catalyzes the cyclization of (S)-2,3 oxidosqualene to lanosterol, a reaction that forms the sterol core. The third module or late pathway involves the ergosterol synthesis itself through consecutive reactions that mainly occur in the endoplasmic reticulum (ER) membrane. Firstly, the squalene synthase ERG9 catalyzes the condensation of 2 farnesyl pyrophosphate moieties to form squalene, which is the precursor of all steroids. Squalene synthase is crucial for balancing the incorporation of farnesyl diphosphate (FPP) into sterol and nonsterol isoprene synthesis. Secondly, the squalene epoxidase ERG1 catalyzes the stereospecific oxidation of squalene to (S)-2,3-epoxysqualene, which is considered to be a rate-limiting enzyme in steroid biosynthesis. Then, the lanosterol synthase ERG7 catalyzes the cyclization of (S)-2,3 oxidosqualene to lanosterol, a reaction that forms the sterol core. In the next steps, lanosterol is transformed to zymosterol through a complex process involving various demethylation, reduction and desaturation reactions. The lanosterol 14-alpha-demethylase ERG11 (also known as CYP51) catalyzes C14-demethylation of lanosterol to produce 4,4'-dimethyl cholesta-8,14,24-triene-3-beta-ol, which is critical for ergosterol biosynthesis. The C-14 reductase ERG24 reduces the C14=C15 double bond of 4,4-dimethyl-cholesta-8,14,24-trienol to produce 4,4-dimethyl-cholesta-8,24-dienol. 4,4-dimethyl-cholesta-8,24-dienol is substrate of the C-4 demethylation complex ERG25-ERG26-ERG27 in which ERG25 catalyzes the three-step monooxygenation required for the demethylation of 4,4-dimethyl and 4alpha-methylsterols, ERG26 catalyzes the oxidative decarboxylation that results in a reduction of the 3-beta-hydroxy group at the C-3 carbon to an oxo group, and ERG27 is responsible for the reduction of the keto group on the C-3. ERG28 has a role as a scaffold to help anchor ERG25, ERG26 and ERG27 to the endoplasmic reticulum and ERG29 regulates the activity of the iron-containing C4-methylsterol oxidase ERG25. Then, the sterol 24-C-methyltransferase ERG6 catalyzes the methyl transfer from S-adenosyl-methionine to the C-24 of zymosterol to form fecosterol. The C-8 sterol isomerase ERG2 catalyzes the reaction which results in unsaturation at C-7 in the B ring of sterols and thus converts fecosterol to episterol. The sterol-C5-desaturase ERG3 then catalyzes the introduction of a C-5 double bond in the B ring to produce 5-dehydroepisterol. The C-22 sterol desaturase ERG5 further converts 5-dehydroepisterol into ergosta-5,7,22,24(28)-tetraen-3beta-ol by forming the C-22(23) double bond in the sterol side chain. Finally, ergosta-5,7,22,24(28)-tetraen-3beta-ol is substrate of the C-24(28) sterol reductase ERG4 to produce ergosterol. This Saccharomyces cerevisiae (strain ATCC 204508 / S288c) (Baker's yeast) protein is Lanosterol synthase ERG7.